The primary structure comprises 318 residues: uncharacterized protein (318 aa).

A helical membrane pass occupies residues 2 to 22 (ILELIIVLVLLVLAFKSLKIL). The interval 295-318 (SDPEDKGVSEVETESQPAEKPEKH) is disordered.

The protein belongs to the band 7/mec-2 family.

Its subcellular location is the membrane. This is an uncharacterized protein from Methanothermobacter thermautotrophicus (strain ATCC 29096 / DSM 1053 / JCM 10044 / NBRC 100330 / Delta H) (Methanobacterium thermoautotrophicum).